The following is a 349-amino-acid chain: Holliday junction branch migration complex subunit RuvB (349 aa).

The segment at M1–Y186 is large ATPase domain (RuvB-L). ATP-binding positions include L25, R26, G67, K70, T71, S72, E133–F135, R176, Y186, and R223. T71 contacts Mg(2+). The segment at E187 to D257 is small ATPAse domain (RuvB-S). Residues E260–S349 are head domain (RuvB-H). 2 residues coordinate DNA: R315 and R320.

This sequence belongs to the RuvB family. In terms of assembly, homohexamer. Forms an RuvA(8)-RuvB(12)-Holliday junction (HJ) complex. HJ DNA is sandwiched between 2 RuvA tetramers; dsDNA enters through RuvA and exits via RuvB. An RuvB hexamer assembles on each DNA strand where it exits the tetramer. Each RuvB hexamer is contacted by two RuvA subunits (via domain III) on 2 adjacent RuvB subunits; this complex drives branch migration. In the full resolvosome a probable DNA-RuvA(4)-RuvB(12)-RuvC(2) complex forms which resolves the HJ.

Its subcellular location is the cytoplasm. It carries out the reaction ATP + H2O = ADP + phosphate + H(+). Its function is as follows. The RuvA-RuvB-RuvC complex processes Holliday junction (HJ) DNA during genetic recombination and DNA repair, while the RuvA-RuvB complex plays an important role in the rescue of blocked DNA replication forks via replication fork reversal (RFR). RuvA specifically binds to HJ cruciform DNA, conferring on it an open structure. The RuvB hexamer acts as an ATP-dependent pump, pulling dsDNA into and through the RuvAB complex. RuvB forms 2 homohexamers on either side of HJ DNA bound by 1 or 2 RuvA tetramers; 4 subunits per hexamer contact DNA at a time. Coordinated motions by a converter formed by DNA-disengaged RuvB subunits stimulates ATP hydrolysis and nucleotide exchange. Immobilization of the converter enables RuvB to convert the ATP-contained energy into a lever motion, pulling 2 nucleotides of DNA out of the RuvA tetramer per ATP hydrolyzed, thus driving DNA branch migration. The RuvB motors rotate together with the DNA substrate, which together with the progressing nucleotide cycle form the mechanistic basis for DNA recombination by continuous HJ branch migration. Branch migration allows RuvC to scan DNA until it finds its consensus sequence, where it cleaves and resolves cruciform DNA. The sequence is that of Holliday junction branch migration complex subunit RuvB from Mycobacterium leprae (strain Br4923).